The primary structure comprises 186 residues: MLLFVGLGNPTPDSENNRHNIGFKLIDALNQKFGLSKQKPKFKGLLTTGNVEDKKVYAIKPLTFMNNSGICIRELIEYFKIDAEDVIVFHDDLDLEFGKVKAKFAGSSAGHNGIESIDKFIGKDYSRVRIGIGRPKTKADVADHVLKDFDEDEMIQLEKITKNIIDSMAILIDKKLDLFSSTVNNK.

H19 serves as the catalytic Proton acceptor. Positions 64, 66, and 112 each coordinate tRNA.

This sequence belongs to the PTH family. Monomer.

Its subcellular location is the cytoplasm. The enzyme catalyses an N-acyl-L-alpha-aminoacyl-tRNA + H2O = an N-acyl-L-amino acid + a tRNA + H(+). Its function is as follows. Hydrolyzes ribosome-free peptidyl-tRNAs (with 1 or more amino acids incorporated), which drop off the ribosome during protein synthesis, or as a result of ribosome stalling. Functionally, catalyzes the release of premature peptidyl moieties from peptidyl-tRNA molecules trapped in stalled 50S ribosomal subunits, and thus maintains levels of free tRNAs and 50S ribosomes. The polypeptide is Peptidyl-tRNA hydrolase (Pelagibacter ubique (strain HTCC1062)).